Here is a 488-residue protein sequence, read N- to C-terminus: Glutamyl-tRNA(Gln) amidotransferase subunit A (488 aa).

Catalysis depends on charge relay system residues Lys77 and Ser152. Ser176 functions as the Acyl-ester intermediate in the catalytic mechanism.

Belongs to the amidase family. GatA subfamily. As to quaternary structure, heterotrimer of A, B and C subunits.

It carries out the reaction L-glutamyl-tRNA(Gln) + L-glutamine + ATP + H2O = L-glutaminyl-tRNA(Gln) + L-glutamate + ADP + phosphate + H(+). Allows the formation of correctly charged Gln-tRNA(Gln) through the transamidation of misacylated Glu-tRNA(Gln) in organisms which lack glutaminyl-tRNA synthetase. The reaction takes place in the presence of glutamine and ATP through an activated gamma-phospho-Glu-tRNA(Gln). The chain is Glutamyl-tRNA(Gln) amidotransferase subunit A from Streptococcus thermophilus (strain CNRZ 1066).